We begin with the raw amino-acid sequence, 119 residues long: Large ribosomal subunit protein uL14 (119 aa).

The protein belongs to the universal ribosomal protein uL14 family. In terms of assembly, part of the 50S ribosomal subunit. Forms a cluster with proteins L3 and L19. In the 70S ribosome, L14 and L19 interact and together make contacts with the 16S rRNA in bridges B5 and B8.

Functionally, binds to 23S rRNA. Forms part of two intersubunit bridges in the 70S ribosome. In Neorickettsia sennetsu (strain ATCC VR-367 / Miyayama) (Ehrlichia sennetsu), this protein is Large ribosomal subunit protein uL14.